Consider the following 212-residue polypeptide: Uracil phosphoribosyltransferase (212 aa).

Residues Arg-78, Arg-103, and 130–138 (DPMLATGGS) contribute to the 5-phospho-alpha-D-ribose 1-diphosphate site. Uracil-binding positions include Ile-193 and 198-200 (GDA). Asp-199 serves as a coordination point for 5-phospho-alpha-D-ribose 1-diphosphate.

The protein belongs to the UPRTase family. The cofactor is Mg(2+).

The enzyme catalyses UMP + diphosphate = 5-phospho-alpha-D-ribose 1-diphosphate + uracil. The protein operates within pyrimidine metabolism; UMP biosynthesis via salvage pathway; UMP from uracil: step 1/1. Its activity is regulated as follows. Allosterically activated by GTP. Its function is as follows. Catalyzes the conversion of uracil and 5-phospho-alpha-D-ribose 1-diphosphate (PRPP) to UMP and diphosphate. The sequence is that of Uracil phosphoribosyltransferase from Bordetella petrii (strain ATCC BAA-461 / DSM 12804 / CCUG 43448).